Here is a 397-residue protein sequence, read N- to C-terminus: Elongation factor Tu 1 (397 aa).

Residues 10–206 (KPHVNIGTIG…AVDENIPQPE (197 aa)) enclose the tr-type G domain. The segment at 19-26 (GHIDHGKT) is G1. 19–26 (GHIDHGKT) lines the GTP pocket. Position 26 (threonine 26) interacts with Mg(2+). The tract at residues 62 to 66 (GITIS) is G2. The interval 83-86 (DCPG) is G3. Residues 83–87 (DCPGH) and 138–141 (NKAD) each bind GTP. A G4 region spans residues 138–141 (NKAD). The segment at 176-178 (SAL) is G5.

Belongs to the TRAFAC class translation factor GTPase superfamily. Classic translation factor GTPase family. EF-Tu/EF-1A subfamily. Monomer.

The protein localises to the cytoplasm. It carries out the reaction GTP + H2O = GDP + phosphate + H(+). Its function is as follows. GTP hydrolase that promotes the GTP-dependent binding of aminoacyl-tRNA to the A-site of ribosomes during protein biosynthesis. In Streptomyces avermitilis (strain ATCC 31267 / DSM 46492 / JCM 5070 / NBRC 14893 / NCIMB 12804 / NRRL 8165 / MA-4680), this protein is Elongation factor Tu 1.